Here is a 607-residue protein sequence, read N- to C-terminus: Chaperone protein DnaK (607 aa).

Residue T174 is modified to Phosphothreonine; by autocatalysis. Positions 577–607 (GYTASGPQGGPNPGGGQSGPDGNVNTDYKVY) are disordered. Positions 583 to 595 (PQGGPNPGGGQSG) are enriched in gly residues.

This sequence belongs to the heat shock protein 70 family.

Its function is as follows. Acts as a chaperone. In Caldicellulosiruptor bescii (strain ATCC BAA-1888 / DSM 6725 / KCTC 15123 / Z-1320) (Anaerocellum thermophilum), this protein is Chaperone protein DnaK.